A 362-amino-acid polypeptide reads, in one-letter code: H-2 class I histocompatibility antigen, L-D alpha chain (362 aa).

The first 24 residues, 1–24 (MGAMAPRTLLLLLAAALAPTQTRA), serve as a signal peptide directing secretion. The segment at 25-114 (GPHSMRYFET…LLGYYNQSAG (90 aa)) is alpha-1. Residues 25 to 309 (GPHSMRYFET…PPPSTDSYMV (285 aa)) lie on the Extracellular side of the membrane. Residue Asn110 is glycosylated (N-linked (GlcNAc...) asparagine). The interval 115 to 206 (GTHTLQWMYG…KNGNATLLRT (92 aa)) is alpha-2. A disulfide bond links Cys125 and Cys188. Asn200 and Asn280 each carry an N-linked (GlcNAc...) asparagine glycan. The interval 207–298 (DSPKAHVTHH…GLPEPLTLRW (92 aa)) is alpha-3. The Ig-like C1-type domain maps to 209–297 (PKAHVTHHPR…EGLPEPLTLR (89 aa)). Residues Cys227 and Cys283 are joined by a disulfide bond. The segment at 299–309 (EPPPSTDSYMV) is connecting peptide. A helical membrane pass occupies residues 310-331 (IVAVLGVLGAMAIIGAVVAFVM). Residues 332–362 (KRRRNTGGKGGDYALAPGSQSSEMSLRDCKA) are Cytoplasmic-facing. The interval 340-362 (KGGDYALAPGSQSSEMSLRDCKA) is disordered. Ser353 and Ser356 each carry phosphoserine.

The protein belongs to the MHC class I family. Heterodimer of an alpha chain and a beta chain (beta-2-microglobulin).

It is found in the membrane. Involved in the presentation of foreign antigens to the immune system. The sequence is that of H-2 class I histocompatibility antigen, L-D alpha chain (H2-L) from Mus musculus (Mouse).